A 97-amino-acid polypeptide reads, in one-letter code: Putative pterin-4-alpha-carbinolamine dehydratase (97 aa).

The protein belongs to the pterin-4-alpha-carbinolamine dehydratase family.

The catalysed reaction is (4aS,6R)-4a-hydroxy-L-erythro-5,6,7,8-tetrahydrobiopterin = (6R)-L-erythro-6,7-dihydrobiopterin + H2O. This chain is Putative pterin-4-alpha-carbinolamine dehydratase, found in Rhizorhabdus wittichii (strain DSM 6014 / CCUG 31198 / JCM 15750 / NBRC 105917 / EY 4224 / RW1) (Sphingomonas wittichii).